A 72-amino-acid chain; its full sequence is Peptide Ctri9194 (72 aa).

Positions 1–23 (MKTQNVLLSFGIVFLMISFSSET) are cleaved as a signal peptide. An Isoleucine amide modification is found at I38. Positions 42-72 (SLKDVESLDFLFDPTFTAADLAVLENALEDY) are excised as a propeptide.

The protein belongs to the non-disulfide-bridged peptide (NDBP) superfamily. Short antimicrobial peptide (group 4) family. In terms of tissue distribution, expressed by the venom gland.

It localises to the secreted. In terms of biological role, antimicrobial peptide. This chain is Peptide Ctri9194, found in Chaerilus tricostatus (Scorpion).